A 282-amino-acid chain; its full sequence is MKLLRYGPSGQEKPGILDANGRIRDLSAHVPDLAGDALSDAGLTRLRAIDPATLPLVSGEPRIGACVGRVGKFIGIGLNYADHAAEAGMPVPKEPVVFGKWTSSICGPNDGIDIPKGSVKTDWEVELGVVIGTTCKDVDEARALDYVAGYCVVNDVSEREWQIERGGQWDKGKGFDTFGPIGPWLVTRDEVPDPQRLDLWLEVDGHRYQNGNTRTMVFTVAQLVAYLSTCMTLQPGDVITTGTPPGVGMGIKPSPVFLKAGQTVRLGIDGLGEQLQSTRNAR.

Glu-124, Glu-126, and Asp-155 together coordinate Mg(2+).

Belongs to the FAH family. Mg(2+) is required as a cofactor.

The protein is Putative hydrolase Bamb_4846 of Burkholderia ambifaria (strain ATCC BAA-244 / DSM 16087 / CCUG 44356 / LMG 19182 / AMMD) (Burkholderia cepacia (strain AMMD)).